A 464-amino-acid polypeptide reads, in one-letter code: MMARRDPTSWAKRLVRAQTLQKQRRAPVGPRAPPPDEEDPRLKCKNCGAFGHTARSTRCPMKCWKAALVPATLGKKEGKENLKPWKPGVEANPGPLNKDKGEKEERPRQQDPQRKALLHMFSGKPPEKPLPNGKGSTESSDYLRVARGPMPVHTTCKRPRMDPVLSGRSATEMSGRGSVLASLSPLRKASLSSSSSLGPKERQTGAAADIPRPAVRHQVHETLLVVEPTHSSPEGSCREVPQAASKTHGLLQAVRTQAQDKRPAVTSQPCPSAATHSLGLGSNLSFGSGAKRPAQAPIQACLNFPKKPRLGPFQIPESTIQGGELGAPENLQPPPAATELGPSRSPQMGRRTPAQVPSVERQPPHRRPCLPTAQACTMSHHPAASHDGAQPLRVLFRRLENGRWSSSLLAAPSFHSPEKPGAFLAQSPHVSEKSEAPCVRVPPSVLYEDLQVSSSSEDSDSDLE.

Disordered regions lie at residues 16 to 42, 71 to 213, 228 to 247, 254 to 273, 309 to 389, and 418 to 437; these read RAQT…DPRL, ATLG…IPRP, PTHS…ASKT, VRTQ…CPSA, RLGP…HDGA, and EKPG…SEAP. 2 stretches are compositionally biased toward basic and acidic residues: residues 74-83 and 97-114; these read GKKEGKENLK and NKDK…DPQR. Over residues 180–197 the composition is skewed to low complexity; it reads LASLSPLRKASLSSSSSL.

This sequence belongs to the FAM90 family.

This Homo sapiens (Human) protein is Protein FAM90A20.